A 246-amino-acid chain; its full sequence is Probable transcriptional regulatory protein APP7_1210 (246 aa).

Belongs to the TACO1 family.

Its subcellular location is the cytoplasm. The protein is Probable transcriptional regulatory protein APP7_1210 of Actinobacillus pleuropneumoniae serotype 7 (strain AP76).